We begin with the raw amino-acid sequence, 170 residues long: UPF0260 protein RPE_1881 (170 aa).

Belongs to the UPF0260 family.

This chain is UPF0260 protein RPE_1881, found in Rhodopseudomonas palustris (strain BisA53).